The primary structure comprises 753 residues: METLKADLSDMSDSPEYFETLANRDLPRLPGTSKLHRAACIKRKSINLSLPSNSYSLSYRQSDDTDGDVSESQSEYRLSSGRRSRASFARALQDPQTPNTPPVSSQHRRFFSEGSFNLPNSNMSHSLNGDSTASNSSTLTPNRIYGDRNRQDYAQSSRYTLPSLPSSPSYNCPTTLRKIHTNTSSNGTSRRVSGLGSFMAQNSSETSSNRTSAYLPGSSTDEQEKRSSVTLASMPSSHSSTASLLSPLDTTSFSTKLDSTILALETDESLSRTISYATTSLPSTPGKRLSKESLAMSEASSINPEYKRIKKRANLIKELVTTEAAYLNDLIAIQQSYGLRVKECSALNPVDAQTVFGDIESLLTFTVEFHSRLYQAGEGSWRVNLDTQLIDPLPCNLGLIFLESLSEIGQIYTGYCNRQDSVFKIITKWREKPATASWIMEGDKIVQKYTNAWDLGSLIIKPLQRLLKYPLLLQKIIDVTPESSSERPDLVLSYQLLQELISGINQKQKPSHKRGSLSASHKRDAAWSLLYKATSNKSRPTTTSTELKTDARLNFQRQVLQDFRQRFAILKALHATLETWYVTVHRGFSVFEKVLAELEGLSALEPEDKPVDTWRKYHLLAHMMTANLPSQIQTSLNSSILNPITNILRVIQKVIQFIISAEFVIPAQKLEAISTLVEKEFHSVVYHFIGIQRSLYENYAQGFLFLIPQDMRDSILEETQDYAELVRAFEPMHYDDEVLLEELMKSVSLAARV.

Disordered stretches follow at residues 52-150 (SNSY…DRNR), 175-194 (TLRK…RVSG), and 200-245 (AQNS…ASLL). Composition is skewed to polar residues over residues 94–105 (DPQTPNTPPVSS), 114–141 (GSFN…TLTP), 181–191 (TNTSSNGTSRR), and 200–220 (AQNS…GSST). A compositionally biased stretch (low complexity) spans 230 to 245 (TLASMPSSHSSTASLL). Residues 311 to 507 (KRANLIKELV…QELISGINQK (197 aa)) form the DH domain.

As to quaternary structure, interacts with cdc42.

Its subcellular location is the cytoplasm. Has a role in the control of cell polarity and cytokinesis. Involved in bipolar growth, via modulation of cdc42-shk1-orb6 signaling, and septum formation. Stimulates guanine nucleotide exchange of cdc42. This is Rho guanine nucleotide exchange factor gef1 (gef1) from Schizosaccharomyces pombe (strain 972 / ATCC 24843) (Fission yeast).